We begin with the raw amino-acid sequence, 431 residues long: Gamma-glutamyl phosphate reductase (431 aa).

Belongs to the gamma-glutamyl phosphate reductase family.

It is found in the cytoplasm. It carries out the reaction L-glutamate 5-semialdehyde + phosphate + NADP(+) = L-glutamyl 5-phosphate + NADPH + H(+). It participates in amino-acid biosynthesis; L-proline biosynthesis; L-glutamate 5-semialdehyde from L-glutamate: step 2/2. Functionally, catalyzes the NADPH-dependent reduction of L-glutamate 5-phosphate into L-glutamate 5-semialdehyde and phosphate. The product spontaneously undergoes cyclization to form 1-pyrroline-5-carboxylate. The chain is Gamma-glutamyl phosphate reductase from Beijerinckia indica subsp. indica (strain ATCC 9039 / DSM 1715 / NCIMB 8712).